The chain runs to 197 residues: Phosphoheptose isomerase (197 aa).

The SIS domain maps to cysteine 40–glutamine 197. Position 55–57 (asparagine 55–glycine 57) interacts with substrate. Residues histidine 64 and glutamate 68 each coordinate Zn(2+). Substrate-binding positions include glutamate 68, asparagine 97 to aspartate 98, serine 123 to serine 125, serine 128, and glutamine 175. Glutamine 175 and histidine 183 together coordinate Zn(2+).

Belongs to the SIS family. GmhA subfamily. In terms of assembly, homotetramer. Requires Zn(2+) as cofactor.

The protein resides in the cytoplasm. The enzyme catalyses 2 D-sedoheptulose 7-phosphate = D-glycero-alpha-D-manno-heptose 7-phosphate + D-glycero-beta-D-manno-heptose 7-phosphate. It participates in carbohydrate biosynthesis; D-glycero-D-manno-heptose 7-phosphate biosynthesis; D-glycero-alpha-D-manno-heptose 7-phosphate and D-glycero-beta-D-manno-heptose 7-phosphate from sedoheptulose 7-phosphate: step 1/1. The protein operates within capsule biogenesis; capsule polysaccharide biosynthesis. In terms of biological role, catalyzes the isomerization of sedoheptulose 7-phosphate in D-glycero-D-manno-heptose 7-phosphate. The protein is Phosphoheptose isomerase (gmhA) of Burkholderia pseudomallei (strain K96243).